We begin with the raw amino-acid sequence, 184 residues long: NADH-quinone oxidoreductase subunit B (184 aa).

[4Fe-4S] cluster contacts are provided by C37, C38, C103, and C132.

It belongs to the complex I 20 kDa subunit family. NDH-1 is composed of 14 different subunits. Subunits NuoB, C, D, E, F, and G constitute the peripheral sector of the complex. [4Fe-4S] cluster is required as a cofactor.

It is found in the cell membrane. It catalyses the reaction a quinone + NADH + 5 H(+)(in) = a quinol + NAD(+) + 4 H(+)(out). In terms of biological role, NDH-1 shuttles electrons from NADH, via FMN and iron-sulfur (Fe-S) centers, to quinones in the respiratory chain. The immediate electron acceptor for the enzyme in this species is believed to be a menaquinone. Couples the redox reaction to proton translocation (for every two electrons transferred, four hydrogen ions are translocated across the cytoplasmic membrane), and thus conserves the redox energy in a proton gradient. This is NADH-quinone oxidoreductase subunit B from Mycolicibacterium gilvum (strain PYR-GCK) (Mycobacterium gilvum (strain PYR-GCK)).